The sequence spans 217 residues: Cytokinin riboside 5'-monophosphate phosphoribohydrolase LOG7 (217 aa).

Substrate is bound by residues E79, 97-98 (RK), 114-120 (GYGTLEE), and T126.

The protein belongs to the LOG family. As to expression, expressed in roots and shoots. Detected in the epidermis of the root elongation zone, cotyledon and leaves, in trichomes and pollen.

It is found in the cytoplasm. Its subcellular location is the nucleus. The catalysed reaction is N(6)-(dimethylallyl)adenosine 5'-phosphate + H2O = N(6)-dimethylallyladenine + D-ribose 5-phosphate. It carries out the reaction 9-ribosyl-trans-zeatin 5'-phosphate + H2O = trans-zeatin + D-ribose 5-phosphate. Cytokinin-activating enzyme working in the direct activation pathway. Phosphoribohydrolase that converts inactive cytokinin nucleotides to the biologically active free-base forms. The sequence is that of Cytokinin riboside 5'-monophosphate phosphoribohydrolase LOG7 (LOG7) from Arabidopsis thaliana (Mouse-ear cress).